A 47-amino-acid polypeptide reads, in one-letter code: PhoP/PhoQ regulator MgrB (47 aa).

The helical transmembrane segment at 6–26 (WVALVVVVLACLLLWAQVFNM) threads the bilayer.

This sequence belongs to the MgrB family. In terms of assembly, may form homooligomers. Probably interacts with the periplasmic domain of PhoQ.

It localises to the cell inner membrane. PhoP-regulated transcription is redox-sensitive, being activated when the periplasm becomes more reducing. MgrB acts between DsbA/DsbB and PhoP/PhoQ in this pathway. Represses PhoP/PhoQ signaling, possibly by binding to the periplasmic domain of PhoQ, altering its activity and that of downstream effector PhoP. In Escherichia coli O127:H6 (strain E2348/69 / EPEC), this protein is PhoP/PhoQ regulator MgrB.